The primary structure comprises 278 residues: tRNA pseudouridine synthase A (278 aa).

Asp-51 functions as the Nucleophile in the catalytic mechanism. Residue Tyr-109 participates in substrate binding.

This sequence belongs to the tRNA pseudouridine synthase TruA family. In terms of assembly, homodimer.

It carries out the reaction uridine(38/39/40) in tRNA = pseudouridine(38/39/40) in tRNA. Its function is as follows. Formation of pseudouridine at positions 38, 39 and 40 in the anticodon stem and loop of transfer RNAs. This chain is tRNA pseudouridine synthase A, found in Paracidovorax citrulli (strain AAC00-1) (Acidovorax citrulli).